We begin with the raw amino-acid sequence, 269 residues long: Formamidopyrimidine-DNA glycosylase (269 aa).

The active-site Schiff-base intermediate with DNA is the proline 2. Catalysis depends on glutamate 3, which acts as the Proton donor. The active-site Proton donor; for beta-elimination activity is lysine 57. Residues histidine 90, arginine 109, and lysine 150 each contribute to the DNA site. The FPG-type zinc finger occupies arginine 235–valine 269. The Proton donor; for delta-elimination activity role is filled by arginine 259.

It belongs to the FPG family. Monomer. The cofactor is Zn(2+).

It carries out the reaction Hydrolysis of DNA containing ring-opened 7-methylguanine residues, releasing 2,6-diamino-4-hydroxy-5-(N-methyl)formamidopyrimidine.. The enzyme catalyses 2'-deoxyribonucleotide-(2'-deoxyribose 5'-phosphate)-2'-deoxyribonucleotide-DNA = a 3'-end 2'-deoxyribonucleotide-(2,3-dehydro-2,3-deoxyribose 5'-phosphate)-DNA + a 5'-end 5'-phospho-2'-deoxyribonucleoside-DNA + H(+). Functionally, involved in base excision repair of DNA damaged by oxidation or by mutagenic agents. Acts as a DNA glycosylase that recognizes and removes damaged bases. Has a preference for oxidized purines, such as 7,8-dihydro-8-oxoguanine (8-oxoG). Has AP (apurinic/apyrimidinic) lyase activity and introduces nicks in the DNA strand. Cleaves the DNA backbone by beta-delta elimination to generate a single-strand break at the site of the removed base with both 3'- and 5'-phosphates. The polypeptide is Formamidopyrimidine-DNA glycosylase (Pectobacterium atrosepticum (strain SCRI 1043 / ATCC BAA-672) (Erwinia carotovora subsp. atroseptica)).